Consider the following 644-residue polypeptide: DNA mismatch repair protein MutL (644 aa).

The interval 363–405 (GTFNPFTDDKTNQHYTKAGSGSGSGYSSGSSSSSGSGSGSSYS) is disordered. The segment covering 389 to 405 (SSGSSSSSGSGSGSSYS) has biased composition (low complexity).

It belongs to the DNA mismatch repair MutL/HexB family.

This protein is involved in the repair of mismatches in DNA. It is required for dam-dependent methyl-directed DNA mismatch repair. May act as a 'molecular matchmaker', a protein that promotes the formation of a stable complex between two or more DNA-binding proteins in an ATP-dependent manner without itself being part of a final effector complex. This is DNA mismatch repair protein MutL from Flavobacterium johnsoniae (strain ATCC 17061 / DSM 2064 / JCM 8514 / BCRC 14874 / CCUG 350202 / NBRC 14942 / NCIMB 11054 / UW101) (Cytophaga johnsonae).